A 419-amino-acid polypeptide reads, in one-letter code: UDP-N-acetylglucosamine 1-carboxyvinyltransferase 2 (419 aa).

24 to 25 (KN) is a binding site for phosphoenolpyruvate. Arg94 is a binding site for UDP-N-acetyl-alpha-D-glucosamine. Cys118 (proton donor) is an active-site residue. Residue Cys118 is modified to 2-(S-cysteinyl)pyruvic acid O-phosphothioketal. Residues 123–127 (RPIDQ), Asp307, and Ile329 contribute to the UDP-N-acetyl-alpha-D-glucosamine site.

The protein belongs to the EPSP synthase family. MurA subfamily.

The protein resides in the cytoplasm. The catalysed reaction is phosphoenolpyruvate + UDP-N-acetyl-alpha-D-glucosamine = UDP-N-acetyl-3-O-(1-carboxyvinyl)-alpha-D-glucosamine + phosphate. It functions in the pathway cell wall biogenesis; peptidoglycan biosynthesis. Functionally, cell wall formation. Adds enolpyruvyl to UDP-N-acetylglucosamine. The polypeptide is UDP-N-acetylglucosamine 1-carboxyvinyltransferase 2 (Staphylococcus aureus (strain MSSA476)).